A 282-amino-acid polypeptide reads, in one-letter code: Lipoyl synthase (282 aa).

Positions 37, 42, 48, 63, 67, 70, and 275 each coordinate [4Fe-4S] cluster. A Radical SAM core domain is found at 49 to 264 (WSRGTATFMI…RLVGIEKGFR (216 aa)).

The protein belongs to the radical SAM superfamily. Lipoyl synthase family. It depends on [4Fe-4S] cluster as a cofactor.

The protein resides in the cytoplasm. The catalysed reaction is [[Fe-S] cluster scaffold protein carrying a second [4Fe-4S](2+) cluster] + N(6)-octanoyl-L-lysyl-[protein] + 2 oxidized [2Fe-2S]-[ferredoxin] + 2 S-adenosyl-L-methionine + 4 H(+) = [[Fe-S] cluster scaffold protein] + N(6)-[(R)-dihydrolipoyl]-L-lysyl-[protein] + 4 Fe(3+) + 2 hydrogen sulfide + 2 5'-deoxyadenosine + 2 L-methionine + 2 reduced [2Fe-2S]-[ferredoxin]. The protein operates within protein modification; protein lipoylation via endogenous pathway; protein N(6)-(lipoyl)lysine from octanoyl-[acyl-carrier-protein]: step 2/2. Its function is as follows. Catalyzes the radical-mediated insertion of two sulfur atoms into the C-6 and C-8 positions of the octanoyl moiety bound to the lipoyl domains of lipoate-dependent enzymes, thereby converting the octanoylated domains into lipoylated derivatives. The polypeptide is Lipoyl synthase (Porphyromonas gingivalis (strain ATCC BAA-308 / W83)).